Consider the following 234-residue polypeptide: Phosphatidylinositol phosphate synthase (234 aa).

A run of 2 helical transmembrane segments spans residues 28 to 48 and 54 to 70; these read LTPD…ALVL and LFPG…FDML. 31 to 34 provides a ligand contact to a CDP-1,2-diacyl-sn-glycerol; it reads DAVT. Mg(2+) is bound by residues Asp68 and Asp71. Gly72, Arg76, and Thr82 together coordinate a CDP-1,2-diacyl-sn-glycerol. Mg(2+)-binding residues include Asp89 and Asp93. The next 4 membrane-spanning stretches (helical) occupy residues 91 to 110, 116 to 134, 155 to 173, and 179 to 197; these read ACDR…WVAF, LLVV…ISYI, RLII…FIAW, and VAMW…QRLY. The Proton acceptor role is filled by Asp93. The interval 211 to 234 is disordered; sequence PSAPVRDDDAQGHPRSGDPGKTQR. Residues 215–228 are compositionally biased toward basic and acidic residues; that stretch reads VRDDDAQGHPRSGD.

The protein belongs to the CDP-alcohol phosphatidyltransferase class-I family. Homodimer. It depends on Mg(2+) as a cofactor.

Its subcellular location is the cell membrane. It catalyses the reaction a CDP-1,2-diacyl-sn-glycerol + 1D-myo-inositol 3-phosphate = a 1,2-diacyl-sn-glycero-3-phospho-(1D-myo-inositol-3-phosphate) + CMP + H(+). The enzyme catalyses 1,2-di-(9Z-octadecenoyl)-sn-glycero-3-cytidine-5'-diphosphate + 1D-myo-inositol 3-phosphate = 1,2-di-(9Z-octadecenoyl)-sn-glycero-3-phospho-(1D-myo-inositol-3-phosphate) + CMP + H(+). It functions in the pathway phospholipid metabolism; phosphatidylinositol phosphate biosynthesis. Its function is as follows. Catalyzes the conjugation of the 1'-hydroxyl group of D-myo-inositol-3-phosphate (also named L-myo-inositol-1-phosphate) with a lipid tail of cytidine diphosphate diacylglycerol (CDP-DAG), forming phosphatidylinositol phosphate (PIP) and CMP. PIP is a precursor of phosphatidylinositol (PI) which is an essential lipid for mycobacteria required for formation of their cell wall. In Mycobacterium marinum (strain ATCC BAA-535 / M), this protein is Phosphatidylinositol phosphate synthase.